The chain runs to 377 residues: Phospho-N-acetylmuramoyl-pentapeptide-transferase (377 aa).

11 helical membrane-spanning segments follow: residues 9 to 29, 59 to 79, 85 to 105, 122 to 142, 155 to 175, 178 to 198, 210 to 230, 247 to 267, 274 to 294, 299 to 319, and 354 to 374; these read YITL…LVAG, TPTM…LLWA, FVWV…MDDY, FFWQ…AVSA, WVGS…VPFF, VSYP…IVGT, GLAI…AYVV, AAEL…FLWF, VFMG…IAVI, IVLF…MVQV, and QVVV…LSTL.

Belongs to the glycosyltransferase 4 family. MraY subfamily. The cofactor is Mg(2+).

The protein resides in the cell inner membrane. It catalyses the reaction UDP-N-acetyl-alpha-D-muramoyl-L-alanyl-gamma-D-glutamyl-meso-2,6-diaminopimeloyl-D-alanyl-D-alanine + di-trans,octa-cis-undecaprenyl phosphate = di-trans,octa-cis-undecaprenyl diphospho-N-acetyl-alpha-D-muramoyl-L-alanyl-D-glutamyl-meso-2,6-diaminopimeloyl-D-alanyl-D-alanine + UMP. It functions in the pathway cell wall biogenesis; peptidoglycan biosynthesis. Its function is as follows. Catalyzes the initial step of the lipid cycle reactions in the biosynthesis of the cell wall peptidoglycan: transfers peptidoglycan precursor phospho-MurNAc-pentapeptide from UDP-MurNAc-pentapeptide onto the lipid carrier undecaprenyl phosphate, yielding undecaprenyl-pyrophosphoryl-MurNAc-pentapeptide, known as lipid I. This is Phospho-N-acetylmuramoyl-pentapeptide-transferase from Bordetella bronchiseptica (strain ATCC BAA-588 / NCTC 13252 / RB50) (Alcaligenes bronchisepticus).